The chain runs to 113 residues: Putative membrane protein insertion efficiency factor (113 aa).

This sequence belongs to the UPF0161 family.

It is found in the cell inner membrane. In terms of biological role, could be involved in insertion of integral membrane proteins into the membrane. The sequence is that of Putative membrane protein insertion efficiency factor from Campylobacter concisus (strain 13826).